Reading from the N-terminus, the 201-residue chain is Dermatopontin (201 aa).

The signal sequence occupies residues 1-18; sequence MDLTLLWVLLPLVTVAWG. Gln-19 bears the Pyrrolidone carboxylic acid mark. The residue at position 23 (Tyr-23) is a Sulfotyrosine. Repeat copies occupy residues 26–79, 70–75, 80–135, and 125–130. Positions 26-135 are 2 X 53-55 AA tandem repeats; the sequence is SYHQYHDYSD…REWQFYCCRY (110 aa). 5 disulfide bridges follow: Cys-50–Cys-77, Cys-90–Cys-132, Cys-106–Cys-133, Cys-139–Cys-196, and Cys-143–Cys-189. Positions 70 to 186 are 3 X 6 AA tandem repeats of D-R-[EQ]-W-[NQK]-[FY]; sequence DRQWNYACMP…AVERDRQWKF (117 aa). Tyr-162, Tyr-164, Tyr-166, and Tyr-167 each carry sulfotyrosine. One copy of the 2-3 repeat lies at 181–186; sequence DRQWKF. At Tyr-194 the chain carries Sulfotyrosine.

Belongs to the dermatopontin family. As to quaternary structure, interacts with TGFB1, DCN and collagen. In terms of processing, sulfated on tyrosine residue(s). As to expression, expressed in skeletal muscle, heart, pancreas, skin and cultured fibroblasts.

The protein localises to the secreted. It is found in the extracellular space. It localises to the extracellular matrix. In terms of biological role, seems to mediate adhesion by cell surface integrin binding. May serve as a communication link between the dermal fibroblast cell surface and its extracellular matrix environment. Enhances TGFB1 activity. Inhibits cell proliferation. Accelerates collagen fibril formation, and stabilizes collagen fibrils against low-temperature dissociation. The polypeptide is Dermatopontin (DPT) (Bos taurus (Bovine)).